Reading from the N-terminus, the 175-residue chain is Shikimate kinase (175 aa).

14-19 lines the ATP pocket; it reads GAGKST. S18 serves as a coordination point for Mg(2+). 3 residues coordinate substrate: D36, R60, and G82. An ATP-binding site is contributed by R120. Residue R140 participates in substrate binding. Residue Q157 participates in ATP binding.

The protein belongs to the shikimate kinase family. Monomer. Mg(2+) serves as cofactor.

It localises to the cytoplasm. The enzyme catalyses shikimate + ATP = 3-phosphoshikimate + ADP + H(+). The protein operates within metabolic intermediate biosynthesis; chorismate biosynthesis; chorismate from D-erythrose 4-phosphate and phosphoenolpyruvate: step 5/7. Its function is as follows. Catalyzes the specific phosphorylation of the 3-hydroxyl group of shikimic acid using ATP as a cosubstrate. The protein is Shikimate kinase of Pasteurella multocida (strain Pm70).